The sequence spans 374 residues: O-methyltransferase acrG (374 aa).

The S-adenosyl-L-homocysteine site is built by tyrosine 19, asparagine 70, aspartate 96, serine 128, and phenylalanine 129. A Mg(2+)-binding site is contributed by phenylalanine 245.

This sequence belongs to the methyltransferase superfamily. Type-7 methyltransferase family.

The protein operates within secondary metabolite biosynthesis. O-methyltransferase; part of the cluster that mediates the biosynthesis of acurin A, a highly reduced polyketide coupled to a serine via a peptide bond. The activities of the highly reducing polyketide synthase acrA and the nonribosomal peptide synthetase acrB are collectively responsible for the synthesis of the acurin A core structure with a heptaketide backbone produced by acrA covalently fused to a L-serine by acrB. After the formation of the PK-NRP hybrid product, it is detached from acrB by reductive release to set up the formation of the lactam ring by aldol condensation. The hydrolyase acrC then catalyzes water loss to generate a double bond in the ring. This double bond is probably reduced, which is followed by three oxidations at C-22 to generate the carboxylic acid moiety, involving probably the FAD-binding monooxygenase acrE and the cytochrome P450 monooxygenases acrD and acrF. Finally, a last methylation step performed by the O-methyltransferase acrG leads to the production of acurin A. This is O-methyltransferase acrG from Aspergillus aculeatus (strain ATCC 16872 / CBS 172.66 / WB 5094).